Consider the following 336-residue polypeptide: Quinolinate synthase (336 aa).

The iminosuccinate site is built by H25 and S42. A [4Fe-4S] cluster-binding site is contributed by C86. Iminosuccinate contacts are provided by residues 117 to 119 (YIN) and S138. C198 serves as a coordination point for [4Fe-4S] cluster. Residues 224 to 226 (HPE) and T241 each bind iminosuccinate. Residue C288 coordinates [4Fe-4S] cluster.

It belongs to the quinolinate synthase family. Type 3 subfamily. It depends on [4Fe-4S] cluster as a cofactor.

The protein localises to the cytoplasm. It catalyses the reaction iminosuccinate + dihydroxyacetone phosphate = quinolinate + phosphate + 2 H2O + H(+). It functions in the pathway cofactor biosynthesis; NAD(+) biosynthesis; quinolinate from iminoaspartate: step 1/1. Its function is as follows. Catalyzes the condensation of iminoaspartate with dihydroxyacetone phosphate to form quinolinate. The polypeptide is Quinolinate synthase (Helicobacter pylori (strain ATCC 700392 / 26695) (Campylobacter pylori)).